The sequence spans 246 residues: Probable transcriptional regulatory protein NT01CX_1819 (246 aa).

The protein belongs to the TACO1 family.

The protein resides in the cytoplasm. This chain is Probable transcriptional regulatory protein NT01CX_1819, found in Clostridium novyi (strain NT).